The sequence spans 488 residues: NADH-quinone oxidoreductase subunit N 2 (488 aa).

The next 14 membrane-spanning stretches (helical) occupy residues 18–38, 45–65, 81–101, 110–130, 135–155, 169–189, 210–230, 242–262, 274–294, 308–328, 331–351, 375–395, 412–434, and 458–478; these read FLPE…ELFI, LVLN…LLIP, PLAV…LPFA, SFYG…FVLA, LIIL…LTAL, YLIL…FMYI, LVLG…AVPF, PTPV…IPLV, LVWT…GNLV, SSIA…VIGM, VIYF…VLAL, IAFA…TVGF, WLAF…LVVV, and FALT…WFLI.

Belongs to the complex I subunit 2 family. In terms of assembly, NDH-1 is composed of 14 different subunits. Subunits NuoA, H, J, K, L, M, N constitute the membrane sector of the complex.

The protein resides in the cell inner membrane. The catalysed reaction is a quinone + NADH + 5 H(+)(in) = a quinol + NAD(+) + 4 H(+)(out). In terms of biological role, NDH-1 shuttles electrons from NADH, via FMN and iron-sulfur (Fe-S) centers, to quinones in the respiratory chain. The immediate electron acceptor for the enzyme in this species is believed to be ubiquinone. Couples the redox reaction to proton translocation (for every two electrons transferred, four hydrogen ions are translocated across the cytoplasmic membrane), and thus conserves the redox energy in a proton gradient. In Aquifex aeolicus (strain VF5), this protein is NADH-quinone oxidoreductase subunit N 2.